The chain runs to 179 residues: Embryo-specific protein ATS3A (179 aa).

Positions 1 to 22 (MLRLAIPLFLFALCSFTLFSSA) are cleaved as a signal peptide. Residues 48–158 (CSYTVIIKTS…NSVWYGFNVC (111 aa)) enclose the PLAT domain.

As to quaternary structure, interacts with EULS3 (via N-terminus). In terms of tissue distribution, expressed in roots, rosette leaves, stems, cauline leaves and flowers.

The protein resides in the secreted. Functionally, may play a role during embryo development. This Arabidopsis thaliana (Mouse-ear cress) protein is Embryo-specific protein ATS3A.